A 432-amino-acid polypeptide reads, in one-letter code: D-amino acid dehydrogenase (432 aa).

3–17 serves as a coordination point for FAD; the sequence is VLVLGSGVIGTASAY.

It belongs to the DadA oxidoreductase family. Requires FAD as cofactor.

It catalyses the reaction a D-alpha-amino acid + A + H2O = a 2-oxocarboxylate + AH2 + NH4(+). It participates in amino-acid degradation; D-alanine degradation; NH(3) and pyruvate from D-alanine: step 1/1. Oxidative deamination of D-amino acids. This chain is D-amino acid dehydrogenase, found in Ectopseudomonas mendocina (strain ymp) (Pseudomonas mendocina).